Consider the following 624-residue polypeptide: Ferredoxin-fold anticodon-binding domain-containing protein 1 (624 aa).

The region spanning 531–624 is the FDX-ACB domain; sequence LYPPCYVHDV…IQQHLYVIPR (94 aa).

The polypeptide is Ferredoxin-fold anticodon-binding domain-containing protein 1 (FDXACB1) (Homo sapiens (Human)).